The primary structure comprises 397 residues: Tryptophan synthase beta chain (397 aa).

Lys88 bears the N6-(pyridoxal phosphate)lysine mark.

It belongs to the TrpB family. As to quaternary structure, tetramer of two alpha and two beta chains. Pyridoxal 5'-phosphate is required as a cofactor.

It carries out the reaction (1S,2R)-1-C-(indol-3-yl)glycerol 3-phosphate + L-serine = D-glyceraldehyde 3-phosphate + L-tryptophan + H2O. The protein operates within amino-acid biosynthesis; L-tryptophan biosynthesis; L-tryptophan from chorismate: step 5/5. Functionally, the beta subunit is responsible for the synthesis of L-tryptophan from indole and L-serine. The protein is Tryptophan synthase beta chain (trpB) of Haemophilus influenzae (strain ATCC 51907 / DSM 11121 / KW20 / Rd).